We begin with the raw amino-acid sequence, 374 residues long: Chaperone protein DnaJ (374 aa).

The 66-residue stretch at 5–70 folds into the J domain; it reads DYYEVLGISR…SKRAAYDQFG (66 aa). The CR-type zinc finger occupies 129 to 207; that stretch reads GKTVKINIPG…CHGQGRVRQE (79 aa). The Zn(2+) site is built by C142, C145, C159, C162, C181, C184, C195, and C198. CXXCXGXG motif repeat units follow at residues 142-149, 159-166, 181-188, and 195-202; these read CEACDGSG, CGTCQGMG, CPTCRGSG, and CKSCHGQG. The segment at 216–238 is disordered; the sequence is PGVDTGDRIRLSGEGEMGVDGGP.

It belongs to the DnaJ family. In terms of assembly, homodimer. Zn(2+) serves as cofactor.

The protein localises to the cytoplasm. Functionally, participates actively in the response to hyperosmotic and heat shock by preventing the aggregation of stress-denatured proteins and by disaggregating proteins, also in an autonomous, DnaK-independent fashion. Unfolded proteins bind initially to DnaJ; upon interaction with the DnaJ-bound protein, DnaK hydrolyzes its bound ATP, resulting in the formation of a stable complex. GrpE releases ADP from DnaK; ATP binding to DnaK triggers the release of the substrate protein, thus completing the reaction cycle. Several rounds of ATP-dependent interactions between DnaJ, DnaK and GrpE are required for fully efficient folding. Also involved, together with DnaK and GrpE, in the DNA replication of plasmids through activation of initiation proteins. The protein is Chaperone protein DnaJ of Marinobacter nauticus (strain ATCC 700491 / DSM 11845 / VT8) (Marinobacter aquaeolei).